The chain runs to 788 residues: Leucine-rich repeat and fibronectin type-III domain-containing protein 2 (788 aa).

The first 20 residues, 1 to 20 (METLLGGLLAFGMAFAVVDA), serve as a signal peptide directing secretion. In terms of domain architecture, LRRNT spans 21–52 (CPKYCVCQNLSESLGTLCPSKGLLFVPPDIDR). The Extracellular segment spans residues 21–534 (CPKYCVCQNL…MHSQILGGTM (514 aa)). N-linked (GlcNAc...) asparagine glycans are attached at residues asparagine 29 and asparagine 74. LRR repeat units follow at residues 53–74 (RTVE…DFAN), 77–98 (GLVD…SFLD), 101–122 (SLRS…TLRG), 125–146 (NLQH…AFED), 150–171 (TLED…SVRR), 174–195 (NLHQ…TFAD), and 198–219 (KLAR…PIFA). Residues 242–288 (NPLHCNCELLWLRRLERDDDLKTCGSPGGLKGRYFWHIREEEFVCEP) form the LRRCT domain. One can recognise an Ig-like domain in the interval 289–375 (PLITQHTHKL…GEATATVEVS (87 aa)). Cysteines 310 and 359 form a disulfide. N-linked (GlcNAc...) asparagine glycans are attached at residues asparagine 332, asparagine 341, asparagine 384, and asparagine 457. Positions 383–423 (SNSTSRMAPPKSRLSDITGSSKTSRGGGGSGAGEPPKSTPE) are disordered. A Fibronectin type-III domain is found at 422–518 (PERAVLVSDV…GCAQFFTKAD (97 aa)). The chain crosses the membrane as a helical span at residues 535 to 555 (ILVIGGIIVATLLVFIVILMV). At 556–788 (RYKVCNHDAP…SSEWVMESTV (233 aa)) the chain is on the cytoplasmic side. Over residues 620-641 (CDSSSSSSLGSGEAAGLSRGPW) the composition is skewed to low complexity. 2 disordered regions span residues 620-655 (CDSS…PSLD) and 668-707 (SQRK…ATRA). The span at 642–651 (RLPPPAPRPK) shows a compositional bias: pro residues. Positions 785-788 (ESTV) match the PDZ-binding motif.

The protein belongs to the LRFN family. In terms of assembly, forms heteromeric complexes with LRFN1, LRFN3 and LRFN4. Can form homomeric complexes, but not across cell junctions. Can form heteromeric complexes with LRFN5. Interacts with DLG1, DLG3 and DLG4; interaction with DLG4 is mediated by the PDZ-binding domain. Also interacts with DLG2. Interacts with 2 NMDA receptor subunits GRIN1 and GRIN2A.

It localises to the membrane. The protein localises to the synapse. Its subcellular location is the postsynaptic cell membrane. Promotes neurite outgrowth in hippocampal neurons. Enhances the cell surface expression of GRIN1 and GRIN2A NMDA receptor subunits. May play a role in redistributing DLG4 to the cell periphery. The sequence is that of Leucine-rich repeat and fibronectin type-III domain-containing protein 2 (Lrfn2) from Rattus norvegicus (Rat).